We begin with the raw amino-acid sequence, 241 residues long: uncharacterized protein (241 aa).

The next 5 membrane-spanning stretches (helical) occupy residues 7-27, 37-57, 72-92, 110-130, and 138-158; these read LIFLLFVIVVSYIFNGLWSVF, LFLLIAFHPQHLDGLIILLLI, IIALVGILLTIIKGVIKSGFG, INLVVFSILLTSVYVLGYVAF, and FGTLYTAFGGLALLGAGIKII.

The protein resides in the cell membrane. This is an uncharacterized protein from Methanocaldococcus jannaschii (strain ATCC 43067 / DSM 2661 / JAL-1 / JCM 10045 / NBRC 100440) (Methanococcus jannaschii).